The primary structure comprises 215 residues: RxLR effector protein PITG_00582 (215 aa).

An N-terminal signal peptide occupies residues 1–19; that stretch reads MLPYKTLLLALGFFFTVQC. The RxLR-dEER motif lies at 39–51; that stretch reads RLLRSPEKTDEER. A coiled-coil region spans residues 81–149; sequence VAKQAKEMSN…QNELEKLAKQ (69 aa).

The protein belongs to the RxLR effector family.

It is found in the secreted. The protein resides in the host cell membrane. In terms of biological role, effector that might be involved in host plant infection. The protein is RxLR effector protein PITG_00582 of Phytophthora infestans (strain T30-4) (Potato late blight agent).